Consider the following 435-residue polypeptide: ATP-dependent Clp protease ATP-binding subunit ClpX 3 (435 aa).

Residues 1–53 (MSSDPPAKTQHCSFCGIEQGRDTPLIAGIEGQICEACVRLAEQVVANWGRKRS) enclose the ClpX-type ZB domain. Positions 12, 15, 34, and 37 each coordinate Zn(2+). 125-132 (PTGTGKTL) contributes to the ATP binding site.

The protein belongs to the ClpX chaperone family. In terms of assembly, component of the ClpX-ClpP complex. Forms a hexameric ring that, in the presence of ATP, binds to fourteen ClpP subunits assembled into a disk-like structure with a central cavity, resembling the structure of eukaryotic proteasomes.

Its function is as follows. ATP-dependent specificity component of the Clp protease. It directs the protease to specific substrates. Can perform chaperone functions in the absence of ClpP. In Methylococcus capsulatus (strain ATCC 33009 / NCIMB 11132 / Bath), this protein is ATP-dependent Clp protease ATP-binding subunit ClpX 3.